The following is a 120-amino-acid chain: Ribonuclease P protein component (120 aa).

The protein belongs to the RnpA family. Consists of a catalytic RNA component (M1 or rnpB) and a protein subunit.

The catalysed reaction is Endonucleolytic cleavage of RNA, removing 5'-extranucleotides from tRNA precursor.. In terms of biological role, RNaseP catalyzes the removal of the 5'-leader sequence from pre-tRNA to produce the mature 5'-terminus. It can also cleave other RNA substrates such as 4.5S RNA. The protein component plays an auxiliary but essential role in vivo by binding to the 5'-leader sequence and broadening the substrate specificity of the ribozyme. This chain is Ribonuclease P protein component, found in Azoarcus sp. (strain BH72).